We begin with the raw amino-acid sequence, 268 residues long: Shikimate dehydrogenase (NADP(+)) (268 aa).

Residues 13-15 (SLS) and Thr60 each bind shikimate. Residue Lys64 is the Proton acceptor of the active site. Glu76 contacts NADP(+). Shikimate contacts are provided by Asn85 and Asp100. Residues 124-128 (GAGGA), 148-153 (NRTMAR), and Ile209 contribute to the NADP(+) site. Tyr211 contributes to the shikimate binding site. Gly232 is an NADP(+) binding site.

This sequence belongs to the shikimate dehydrogenase family. In terms of assembly, homodimer.

The catalysed reaction is shikimate + NADP(+) = 3-dehydroshikimate + NADPH + H(+). Its pathway is metabolic intermediate biosynthesis; chorismate biosynthesis; chorismate from D-erythrose 4-phosphate and phosphoenolpyruvate: step 4/7. Its function is as follows. Involved in the biosynthesis of the chorismate, which leads to the biosynthesis of aromatic amino acids. Catalyzes the reversible NADPH linked reduction of 3-dehydroshikimate (DHSA) to yield shikimate (SA). This is Shikimate dehydrogenase (NADP(+)) from Staphylococcus aureus (strain JH1).